A 1873-amino-acid chain; its full sequence is SAGA complex subunit Spt20 (1873 aa).

It belongs to the SPT20 family. Component of the Spt-Ada-Gcn5 acetyltransferase (SAGA) complex consisting of wda/Taf5L, Saf6, Taf9, Taf10b, Taf12, Ada1, Spt3, Spt7, Spt20, Sf3b3, Sf3b5, Nipped-A/Tra1, a histone acetyltransferase (HAT) module made up of Gcn5, Ada2b (Isoform B), Ada3 and Sgf29, and a deubiquitinase (DUB) module made up of not/nonstop, Sgf11 and e(y)2 tethered to SAGA by Atxn7.

Its subcellular location is the nucleus. Its function is as follows. Component of the transcription regulatory complex SAGA, a multiprotein complex that activates transcription by remodeling chromatin and mediating histone acetylation and deubiquitination. The SAGA complex predominantly acetylates histone H3. This is SAGA complex subunit Spt20 from Drosophila melanogaster (Fruit fly).